A 135-amino-acid polypeptide reads, in one-letter code: Small ribosomal subunit protein eS24A (135 aa).

Ser-2 carries the N-acetylserine modification. The residue at position 14 (Ser-14) is a Phosphoserine. Lys-21 participates in a covalent cross-link: Glycyl lysine isopeptide (Lys-Gly) (interchain with G-Cter in ubiquitin). Ser-56 carries the post-translational modification Phosphoserine. Residues 102–135 (KASRQQRKQKKNRDKKIFGTGKRLAKKVARRNAD) form a disordered region. Basic residues-rich tracts occupy residues 105 to 115 (RQQRKQKKNRD) and 124 to 135 (RLAKKVARRNAD).

Belongs to the eukaryotic ribosomal protein eS24 family. Component of the small ribosomal subunit (SSU). Mature yeast ribosomes consist of a small (40S) and a large (60S) subunit. The 40S small subunit contains 1 molecule of ribosomal RNA (18S rRNA) and 33 different proteins (encoded by 57 genes). The large 60S subunit contains 3 rRNA molecules (25S, 5.8S and 5S rRNA) and 46 different proteins (encoded by 81 genes). Post-translationally, N-terminally acetylated by acetyltransferase NatA. Also partially acetylated by NatC.

Its subcellular location is the cytoplasm. In terms of biological role, component of the ribosome, a large ribonucleoprotein complex responsible for the synthesis of proteins in the cell. The small ribosomal subunit (SSU) binds messenger RNAs (mRNAs) and translates the encoded message by selecting cognate aminoacyl-transfer RNA (tRNA) molecules. The large subunit (LSU) contains the ribosomal catalytic site termed the peptidyl transferase center (PTC), which catalyzes the formation of peptide bonds, thereby polymerizing the amino acids delivered by tRNAs into a polypeptide chain. The nascent polypeptides leave the ribosome through a tunnel in the LSU and interact with protein factors that function in enzymatic processing, targeting, and the membrane insertion of nascent chains at the exit of the ribosomal tunnel. The polypeptide is Small ribosomal subunit protein eS24A (Saccharomyces cerevisiae (strain ATCC 204508 / S288c) (Baker's yeast)).